Reading from the N-terminus, the 935-residue chain is Progesterone receptor (935 aa).

Residues 1-164 are AF3; mediates transcriptional activation; it reads MTELKAKGPR…PATQGVLSPL (164 aa). The tract at residues 1–254 is disordered; that stretch reads MTELKAKGPR…GGAAAGGGAA (254 aa). The segment at 1-568 is modulating, Pro-Rich; sequence MTELKAKGPR…YSFESLPQKI (568 aa). Ser-20 carries the post-translational modification Phosphoserine. The LXXL motif 1 signature appears at 55–59; the sequence is LDGLL. Residue Ser-81 is modified to Phosphoserine. The LXXL motif 2 signature appears at 115-119; it reads LDTLL. Residues Ser-130 and Ser-162 each carry the phosphoserine modification. The interval 165-305 is mediates transcriptional transrepression; the sequence is MSRSGGKAGD…LATTVMDFIH (141 aa). Residues 183–187 carry the Nuclear localization signal motif; that stretch reads KVLPR. Phosphoserine is present on residues Ser-190 and Ser-213. The span at 220-231 shows a compositional bias: acidic residues; that stretch reads EVEEEDGSESED. Positions 232 to 246 are enriched in low complexity; it reads SAGPLLKGKPRALGG. Position 294 is a phosphoserine; by MAPK1 (Ser-294). The segment at 331-378 is disordered; that stretch reads GGAGAASAFAPPRSSPSASSTPVAVGDFPDCAYPPDAEPKDDAYPLYS. A compositionally biased stretch (low complexity) spans 335–350; that stretch reads AASAFAPPRSSPSASS. At Ser-345 the chain carries Phosphoserine; by MAPK. Lys-388 is covalently cross-linked (Glycyl lysine isopeptide (Lys-Gly) (interchain with G-Cter in SUMO); alternate). A Glycyl lysine isopeptide (Lys-Gly) (interchain with G-Cter in ubiquitin); alternate cross-link involves residue Lys-388. At Ser-400 the chain carries Phosphoserine; by CDK2. Residues 418–430 show a composition bias toward pro residues; sequence PLGPPPPLPPRAP. The interval 418-438 is disordered; the sequence is PLGPPPPLPPRAPPTRAGEAA. Positions 456 to 548 are AF1; mediates transcriptional activation; it reads STLECILYKA…VYPPYLNYLR (93 aa). Lys-533 is covalently cross-linked (Glycyl lysine isopeptide (Lys-Gly) (interchain with G-Cter in SUMO)). 2 consecutive NR C4-type zinc fingers follow at residues 569–589 and 605–629; these read CLICGDEASGCHYGVLTCGSC and CAGRNDCIVDKIRRKNCPACRLRKC. The nuclear receptor DNA-binding region spans 569 to 641; that stretch reads CLICGDEASG…AGMVLGGRKF (73 aa). Ser-678 carries the phosphoserine modification. An NR LBD domain is found at 681-915; it reads QDIQLIPPLI…EFPEMMSEVI (235 aa). Residues 689–935 are AF2; mediates transcriptional activation; sequence LINLLMSIEP…MVKPLLFHKK (247 aa).

Belongs to the nuclear hormone receptor family. Interacts with SMARD1 and UNC45A. Interacts with CUEDC2; the interaction promotes ubiquitination, decreases sumoylation, and represses transcriptional activity. Interacts with PIAS3; the interaction promotes sumoylation of PR in a hormone-dependent manner, inhibits DNA-binding, and alters nuclear export. Interacts with SP1; the interaction requires ligand-induced phosphorylation on Ser-345 by ERK1/2-MAPK. Interacts with PRMT2. Interacts with NCOA2 and NCOA1. Interacts with KLF9. Interacts with GTF2B. Post-translationally, phosphorylated on multiple serine sites. Several of these sites are hormone-dependent. Phosphorylation on Ser-294 is highly hormone-dependent and modulates ubiquitination and sumoylation on Lys-388. Phosphorylation on Ser-102 and Ser-345 also requires induction by hormone. Basal phosphorylation on Ser-81, Ser-162, Ser-190 and Ser-400 is increased in response to progesterone and can be phosphorylated in vitro by the CDK2-A1 complex. Increased levels of phosphorylation on Ser-400 also in the presence of EGF, heregulin, IGF, PMA and FBS. Phosphorylation at this site by CDK2 is ligand-independent, and increases nuclear translocation and transcriptional activity. Phosphorylation at Ser-162 and Ser-294, but not at Ser-190, is impaired during the G(2)/M phase of the cell cycle. Phosphorylation on Ser-345 by ERK1/2 MAPK is required for interaction with SP1. In terms of processing, sumoylation is hormone-dependent and represses transcriptional activity. Sumoylation on all three sites is enhanced by PIAS3. Desumoylated by SENP1. Sumoylation on Lys-388, the main site of sumoylation, is repressed by ubiquitination on the same site, and modulated by phosphorylation at Ser-294. Ubiquitination is hormone-dependent and represses sumoylation on the same site. Promoted by MAPK-mediated phosphorylation on Ser-294. Post-translationally, palmitoylated by ZDHHC7 and ZDHHC21. Palmitoylation is required for plasma membrane targeting and for rapid intracellular signaling via ERK and AKT kinases and cAMP generation.

It localises to the nucleus. Its subcellular location is the cytoplasm. Its function is as follows. The steroid hormones and their receptors are involved in the regulation of eukaryotic gene expression and affect cellular proliferation and differentiation in target tissues. Transcriptional activator of several progesteron-dependent promoters in a variety of cell types. Involved in activation of SRC-dependent MAPK signaling on hormone stimulation. In Pongo pygmaeus (Bornean orangutan), this protein is Progesterone receptor (PGR).